The sequence spans 1009 residues: DENN domain-containing protein 2A (1009 aa).

4 disordered regions span residues 15–153 (AEAS…LRFQ), 171–334 (KDGS…HRKS), 434–479 (KLLD…KKRK), and 498–532 (KRVKRLSQSMESNSGKVTDENSESDSDTEEKLKAH). Basic and acidic residues-rich tracts occupy residues 45–59 (NIKDKISEWEGKKEV), 130–147 (QPEREVDPSWGRGREPRL), 218–247 (HPSDLEGREPTPELVEDRKGSCRRPWDRSL), and 275–284 (HAGEGDKDGK). Pro residues predominate over residues 297 to 314 (PPLPSLPPPPLPSSPPPS). Basic and acidic residues predominate over residues 434 to 443 (KLLDTRKLSR). Residues 503–513 (LSQSMESNSGK) show a composition bias toward polar residues. Ser551 is modified (phosphoserine). In terms of domain architecture, uDENN spans 566 to 715 (EYFVVVSLHK…PFPALGKTIL (150 aa)). The region spanning 737-870 (RLEHVDFESL…LQVALEHILE (134 aa)) is the cDENN domain. The dDENN domain maps to 872–969 (RNELACEQDE…QERELRRQDA (98 aa)).

Its subcellular location is the cytoplasm. The protein localises to the cytoskeleton. In terms of biological role, guanine nucleotide exchange factor (GEF) which may activate RAB9A and RAB9B. Promotes the exchange of GDP to GTP, converting inactive GDP-bound Rab proteins into their active GTP-bound form. May play a role in late endosomes back to trans-Golgi network/TGN transport. In Homo sapiens (Human), this protein is DENN domain-containing protein 2A (DENND2A).